The primary structure comprises 219 residues: Claudin-6 (219 aa).

The Cytoplasmic segment spans residues 1-7 (MASTGLQ). A helical membrane pass occupies residues 8–28 (ILGIVLTLLGWVNALVSCALP). Residues 29–81 (MWKVTAFIGNSIVVAQMVWEGLWMSCVVQSTGQMQCKVYDSLLALPQDLQAAR) are Extracellular-facing. Residues 82–102 (ALCVVTLLIVLLGLLVYLAGA) form a helical membrane-spanning segment. Topologically, residues 103-116 (KCTTCVEDRNSKSR) are cytoplasmic. A helical transmembrane segment spans residues 117-137 (LVLISGIIFVISGVLTLIPVC). The Extracellular segment spans residues 138 to 163 (WTAHSIIQDFYNPLVADAQKRELGAS). Residues 164–184 (LYLGWAASGLLLLGGGLLCCA) form a helical membrane-spanning segment. Over 185–219 (CSSGGTQGPRHYMACYSTSVPHSRGPSEYPTKNYV) the chain is Cytoplasmic. Phosphoserine occurs at positions 201, 203, 207, and 211. The interactions with TJP1, TJP2 and TJP3 stretch occupies residues 218-219 (YV).

Belongs to the claudin family. As to quaternary structure, directly interacts with TJP1/ZO-1, TJP2/ZO-2 and TJP3/ZO-3. Interacts with CLDN1, CD81 and OCLN. As to expression, expressed mostly in embryonic tissues.

Its subcellular location is the cell junction. The protein resides in the tight junction. The protein localises to the cell membrane. Plays a major role in tight junction-specific obliteration of the intercellular space, through calcium-independent cell-adhesion activity. This Mus musculus (Mouse) protein is Claudin-6 (Cldn6).